Consider the following 409-residue polypeptide: Glycosyltransferase GtfC (409 aa).

It belongs to the glycosyltransferase 28 family.

It catalyses the reaction dTDP-beta-L-vancosamine + devancoaminyl-vancomycin = epivancomycin + dTDP + H(+). The enzyme catalyses chloroorienticin B + dTDP-beta-L-vancosamine = chloroeremomycin + dTDP + H(+). It functions in the pathway antibiotic biosynthesis; vancomycin biosynthesis. Its function is as follows. Catalyzes the attachment of dTDP-L-4-epi-vancosamine to chloroorienticin B to form chloroeremomycin in the biosynthesis of glycopeptide antibiotic chloroeremomycin, a member of the vancomycin group of antibiotics. Also able to use dTDP-L-4-epi-vancosamine and devancoaminyl-vancomycin (DVV) to create epivancomycin. Acts downstream of GtfA. The sequence is that of Glycosyltransferase GtfC (gtfC) from Amycolatopsis orientalis (Nocardia orientalis).